A 431-amino-acid chain; its full sequence is MANSC domain-containing protein 1 (431 aa).

An N-terminal signal peptide occupies residues 1 to 26 (MFFGGKGSLTYTLVIICFLTLRLAAS). Residues 27 to 385 (QNCLNKSLED…QYGLPFEKWL (359 aa)) lie on the Extracellular side of the membrane. The N-linked (GlcNAc...) asparagine glycan is linked to N31. The MANSC domain maps to 33 to 117 (SLEDVVIDIQ…LKPAKGLRSY (85 aa)). 2 N-linked (GlcNAc...) asparagine glycosylation sites follow: N222 and N251. The segment at 236–279 (HTTSATPKPAIRLPTNASVTPSGTSQPQLATTSPPVTTVTSQPP) is disordered. The span at 250-265 (TNASVTPSGTSQPQLA) shows a compositional bias: polar residues. Residues 266-279 (TTSPPVTTVTSQPP) are compositionally biased toward low complexity. N327 and N352 each carry an N-linked (GlcNAc...) asparagine glycan. The disordered stretch occupies residues 352–372 (NKTASWEGREASPGRSSQGNV). Residues 386–408 (LIGSLLFGVLFLVIGLVLLGRIL) traverse the membrane as a helical segment. The Cytoplasmic portion of the chain corresponds to 409 to 431 (SESLRRKRYSRLDYLINGIYVDI).

It localises to the membrane. This Macaca fascicularis (Crab-eating macaque) protein is MANSC domain-containing protein 1 (MANSC1).